The sequence spans 205 residues: RNA pyrophosphohydrolase (205 aa).

Positions 6–149 (GFRPNVGIVL…KRGVYARALR (144 aa)) constitute a Nudix hydrolase domain. A Nudix box motif is present at residues 38–59 (GGMNTDETPVEAMYRELREETG). The interval 178 to 205 (GSSAAGHDSPRKRPRKRNGARAMRINND) is disordered. Residues 187-196 (PRKRPRKRNG) show a composition bias toward basic residues.

The protein belongs to the Nudix hydrolase family. RppH subfamily. The cofactor is a divalent metal cation.

Its function is as follows. Accelerates the degradation of transcripts by removing pyrophosphate from the 5'-end of triphosphorylated RNA, leading to a more labile monophosphorylated state that can stimulate subsequent ribonuclease cleavage. This is RNA pyrophosphohydrolase from Xanthomonas axonopodis pv. citri (strain 306).